A 310-amino-acid polypeptide reads, in one-letter code: Tagatose-6-phosphate kinase (310 aa).

The protein belongs to the carbohydrate kinase PfkB family. LacC subfamily.

The enzyme catalyses D-tagatofuranose 6-phosphate + ATP = D-tagatofuranose 1,6-bisphosphate + ADP + H(+). It participates in carbohydrate metabolism; D-tagatose 6-phosphate degradation; D-glyceraldehyde 3-phosphate and glycerone phosphate from D-tagatose 6-phosphate: step 1/2. The protein is Tagatose-6-phosphate kinase of Streptococcus uberis (strain ATCC BAA-854 / 0140J).